A 338-amino-acid polypeptide reads, in one-letter code: Lipoate-protein ligase A (338 aa).

The 188-residue stretch at 29–216 (PATQRVLFLW…AFFAHYGERV (188 aa)) folds into the BPL/LPL catalytic domain. Residues Arg71, 76–79 (GAVF), and Lys134 each bind ATP. Position 134 (Lys134) interacts with (R)-lipoate.

The protein belongs to the LplA family. In terms of assembly, monomer.

It localises to the cytoplasm. It carries out the reaction L-lysyl-[lipoyl-carrier protein] + (R)-lipoate + ATP = N(6)-[(R)-lipoyl]-L-lysyl-[lipoyl-carrier protein] + AMP + diphosphate + H(+). Its pathway is protein modification; protein lipoylation via exogenous pathway; protein N(6)-(lipoyl)lysine from lipoate: step 1/2. It participates in protein modification; protein lipoylation via exogenous pathway; protein N(6)-(lipoyl)lysine from lipoate: step 2/2. Catalyzes both the ATP-dependent activation of exogenously supplied lipoate to lipoyl-AMP and the transfer of the activated lipoyl onto the lipoyl domains of lipoate-dependent enzymes. This chain is Lipoate-protein ligase A, found in Shigella sonnei (strain Ss046).